A 96-amino-acid polypeptide reads, in one-letter code: Protein RnfH (96 aa).

Belongs to the UPF0125 (RnfH) family.

The protein is Protein RnfH of Escherichia coli O17:K52:H18 (strain UMN026 / ExPEC).